Here is a 186-residue protein sequence, read N- to C-terminus: NADH dehydrogenase [ubiquinone] 1 beta subcomplex subunit 8, mitochondrial (186 aa).

A mitochondrion-targeting transit peptide spans 1-28 (MAVARAGVLGVQWLQRASRNVMPLGART). The helical transmembrane segment at 133–153 (LFGFLAFMIFMCWVGDVYPVY) threads the bilayer.

Belongs to the complex I NDUFB8 subunit family. As to quaternary structure, complex I is composed of 45 different subunits.

The protein resides in the mitochondrion inner membrane. Its function is as follows. Accessory subunit of the mitochondrial membrane respiratory chain NADH dehydrogenase (Complex I), that is believed not to be involved in catalysis. Complex I functions in the transfer of electrons from NADH to the respiratory chain. The immediate electron acceptor for the enzyme is believed to be ubiquinone. This Homo sapiens (Human) protein is NADH dehydrogenase [ubiquinone] 1 beta subcomplex subunit 8, mitochondrial (NDUFB8).